The primary structure comprises 443 residues: Tubulin beta chain (443 aa).

Residues glutamine 11, glutamate 69, serine 138, glycine 142, threonine 143, glycine 144, asparagine 204, and asparagine 226 each coordinate GTP. Glutamate 69 is a binding site for Mg(2+).

This sequence belongs to the tubulin family. Dimer of alpha and beta chains. A typical microtubule is a hollow water-filled tube with an outer diameter of 25 nm and an inner diameter of 15 nM. Alpha-beta heterodimers associate head-to-tail to form protofilaments running lengthwise along the microtubule wall with the beta-tubulin subunit facing the microtubule plus end conferring a structural polarity. Microtubules usually have 13 protofilaments but different protofilament numbers can be found in some organisms and specialized cells. The cofactor is Mg(2+).

It is found in the cytoplasm. The protein resides in the cytoskeleton. Functionally, tubulin is the major constituent of microtubules, a cylinder consisting of laterally associated linear protofilaments composed of alpha- and beta-tubulin heterodimers. Microtubules grow by the addition of GTP-tubulin dimers to the microtubule end, where a stabilizing cap forms. Below the cap, tubulin dimers are in GDP-bound state, owing to GTPase activity of alpha-tubulin. The polypeptide is Tubulin beta chain (Thalassiosira weissflogii (Marine diatom)).